The chain runs to 474 residues: ATP synthase subunit beta (474 aa).

ATP is bound at residue G152–T159.

This sequence belongs to the ATPase alpha/beta chains family. As to quaternary structure, F-type ATPases have 2 components, CF(1) - the catalytic core - and CF(0) - the membrane proton channel. CF(1) has five subunits: alpha(3), beta(3), gamma(1), delta(1), epsilon(1). CF(0) has four main subunits: a(1), b(1), b'(1) and c(9-12).

The protein localises to the cell inner membrane. The enzyme catalyses ATP + H2O + 4 H(+)(in) = ADP + phosphate + 5 H(+)(out). Produces ATP from ADP in the presence of a proton gradient across the membrane. The catalytic sites are hosted primarily by the beta subunits. This Rhodospirillum rubrum (strain ATCC 11170 / ATH 1.1.1 / DSM 467 / LMG 4362 / NCIMB 8255 / S1) protein is ATP synthase subunit beta.